The primary structure comprises 197 residues: UPF0637 protein LEUM_0496 (197 aa).

The protein belongs to the UPF0637 family.

This is UPF0637 protein LEUM_0496 from Leuconostoc mesenteroides subsp. mesenteroides (strain ATCC 8293 / DSM 20343 / BCRC 11652 / CCM 1803 / JCM 6124 / NCDO 523 / NBRC 100496 / NCIMB 8023 / NCTC 12954 / NRRL B-1118 / 37Y).